Here is a 339-residue protein sequence, read N- to C-terminus: Glycerol-3-phosphate dehydrogenase [NAD(P)+] (339 aa).

The NADPH site is built by Ser14, Tyr15, His35, and Lys109. Sn-glycerol 3-phosphate is bound by residues Lys109, Gly138, and Thr140. Position 142 (Ala142) interacts with NADPH. Residues Lys194, Asp247, Ser257, Arg258, and Asn259 each contribute to the sn-glycerol 3-phosphate site. Lys194 functions as the Proton acceptor in the catalytic mechanism. Residue Arg258 coordinates NADPH. NADPH is bound by residues Val282 and Glu284.

It belongs to the NAD-dependent glycerol-3-phosphate dehydrogenase family.

The protein localises to the cytoplasm. It catalyses the reaction sn-glycerol 3-phosphate + NAD(+) = dihydroxyacetone phosphate + NADH + H(+). The catalysed reaction is sn-glycerol 3-phosphate + NADP(+) = dihydroxyacetone phosphate + NADPH + H(+). It participates in membrane lipid metabolism; glycerophospholipid metabolism. Catalyzes the reduction of the glycolytic intermediate dihydroxyacetone phosphate (DHAP) to sn-glycerol 3-phosphate (G3P), the key precursor for phospholipid synthesis. This Shewanella halifaxensis (strain HAW-EB4) protein is Glycerol-3-phosphate dehydrogenase [NAD(P)+].